The chain runs to 181 residues: Adenine phosphoribosyltransferase (181 aa).

It belongs to the purine/pyrimidine phosphoribosyltransferase family. As to quaternary structure, homodimer.

It is found in the cytoplasm. The catalysed reaction is AMP + diphosphate = 5-phospho-alpha-D-ribose 1-diphosphate + adenine. Its pathway is purine metabolism; AMP biosynthesis via salvage pathway; AMP from adenine: step 1/1. Catalyzes a salvage reaction resulting in the formation of AMP, that is energically less costly than de novo synthesis. The sequence is that of Adenine phosphoribosyltransferase from Methylobacterium sp. (strain 4-46).